A 35-amino-acid chain; its full sequence is Z-limacoditoxin(1)-Dv4 (35 aa).

An N-terminal signal peptide occupies residues M1–P22. At Q23 the chain carries Pyrrolidone carboxylic acid. P32 is modified (proline amide).

The protein belongs to the limacoditoxin-1 (ACP-like) family. Expressed by the venom secretory cell of the spine. The spine is a cuticular structure containing a single large nucleated venom-secreting cell at its base. It is an independent unit capable of producing, storing and injecting venom. On the back of D.vulnerans caterpillars, spines are grouped together by 50 to 100 to form scoli, of which there are eight in D.vulnerans.

Its subcellular location is the secreted. In terms of biological role, potently activates insect GPCR. More precisely, it activates the ACP receptor (ACPR) from the mosquito A.aegypti (EC(50)=3.07 nM) with a potency comparable to that of the endogenous ligand. Has no activity on receptors of the closely related neuropeptides adipokinetic hormone and corazonin. In vivo, does not reveal any observable effects when injected into crickets (A.domesticus). Does not induce increase in intracellular calcium in mouse DRG neurons, suggesting that it does not induce pain. This Doratifera vulnerans (Mottled cup moth) protein is Z-limacoditoxin(1)-Dv4.